The following is a 199-amino-acid chain: Recombination protein RecR (199 aa).

The C4-type zinc-finger motif lies at 58-73 (CRRCFNLTEGEECDIC). The 96-residue stretch at 81–176 (SVICVVEDPY…RVTALASGLP (96 aa)) folds into the Toprim domain.

This sequence belongs to the RecR family.

May play a role in DNA repair. It seems to be involved in an RecBC-independent recombinational process of DNA repair. It may act with RecF and RecO. The sequence is that of Recombination protein RecR from Rubrobacter xylanophilus (strain DSM 9941 / JCM 11954 / NBRC 16129 / PRD-1).